Reading from the N-terminus, the 249-residue chain is Triosephosphate isomerase (249 aa).

8 to 10 contacts substrate; it reads NWK. H95 functions as the Electrophile in the catalytic mechanism. E163 serves as the catalytic Proton acceptor. Substrate-binding residues include G169 and S209.

The protein belongs to the triosephosphate isomerase family. In terms of assembly, homodimer.

The protein localises to the cytoplasm. The enzyme catalyses D-glyceraldehyde 3-phosphate = dihydroxyacetone phosphate. Its pathway is carbohydrate biosynthesis; gluconeogenesis. It participates in carbohydrate degradation; glycolysis; D-glyceraldehyde 3-phosphate from glycerone phosphate: step 1/1. Its function is as follows. Involved in the gluconeogenesis. Catalyzes stereospecifically the conversion of dihydroxyacetone phosphate (DHAP) to D-glyceraldehyde-3-phosphate (G3P). This Orientia tsutsugamushi (strain Ikeda) (Rickettsia tsutsugamushi) protein is Triosephosphate isomerase.